The following is a 42-amino-acid chain: Photosystem II reaction center protein J (42 aa).

The helical transmembrane segment at 10–30 threads the bilayer; it reads IPLWIIGTLAGTLVIGLLAIF.

It belongs to the PsbJ family. PSII is composed of 1 copy each of membrane proteins PsbA, PsbB, PsbC, PsbD, PsbE, PsbF, PsbH, PsbI, PsbJ, PsbK, PsbL, PsbM, PsbT, PsbX, PsbY, PsbZ, Psb30/Ycf12, at least 3 peripheral proteins of the oxygen-evolving complex and a large number of cofactors. It forms dimeric complexes.

The protein localises to the plastid. Its subcellular location is the chloroplast thylakoid membrane. In terms of biological role, one of the components of the core complex of photosystem II (PSII). PSII is a light-driven water:plastoquinone oxidoreductase that uses light energy to abstract electrons from H(2)O, generating O(2) and a proton gradient subsequently used for ATP formation. It consists of a core antenna complex that captures photons, and an electron transfer chain that converts photonic excitation into a charge separation. This Chaetosphaeridium globosum (Charophycean green alga) protein is Photosystem II reaction center protein J.